Reading from the N-terminus, the 201-residue chain is Recombination protein RecR (201 aa).

Residues 57–72 (CSDCRTFTEQDVCAIC) form a C4-type zinc finger. One can recognise a Toprim domain in the interval 81 to 176 (GQICVVESPA…MASRIAHGVP (96 aa)).

It belongs to the RecR family.

Functionally, may play a role in DNA repair. It seems to be involved in an RecBC-independent recombinational process of DNA repair. It may act with RecF and RecO. The chain is Recombination protein RecR from Pectobacterium carotovorum subsp. carotovorum (strain PC1).